The following is a 729-amino-acid chain: Fatty acid oxidation complex subunit alpha (729 aa).

The enoyl-CoA hydratase/isomerase stretch occupies residues methionine 1 to lysine 189. Aspartate 296 serves as a coordination point for substrate. The tract at residues glutamate 311–alanine 729 is 3-hydroxyacyl-CoA dehydrogenase. NAD(+) is bound by residues methionine 324, aspartate 343, valine 400 to glutamate 402, lysine 407, and serine 429. The active-site For 3-hydroxyacyl-CoA dehydrogenase activity is histidine 450. NAD(+) is bound at residue asparagine 453. 2 residues coordinate substrate: asparagine 500 and tyrosine 660.

This sequence in the N-terminal section; belongs to the enoyl-CoA hydratase/isomerase family. It in the C-terminal section; belongs to the 3-hydroxyacyl-CoA dehydrogenase family. As to quaternary structure, heterotetramer of two alpha chains (FadB) and two beta chains (FadA).

The enzyme catalyses a (3S)-3-hydroxyacyl-CoA + NAD(+) = a 3-oxoacyl-CoA + NADH + H(+). It catalyses the reaction a (3S)-3-hydroxyacyl-CoA = a (2E)-enoyl-CoA + H2O. It carries out the reaction a 4-saturated-(3S)-3-hydroxyacyl-CoA = a (3E)-enoyl-CoA + H2O. The catalysed reaction is (3S)-3-hydroxybutanoyl-CoA = (3R)-3-hydroxybutanoyl-CoA. The enzyme catalyses a (3Z)-enoyl-CoA = a 4-saturated (2E)-enoyl-CoA. It catalyses the reaction a (3E)-enoyl-CoA = a 4-saturated (2E)-enoyl-CoA. It participates in lipid metabolism; fatty acid beta-oxidation. In terms of biological role, involved in the aerobic and anaerobic degradation of long-chain fatty acids via beta-oxidation cycle. Catalyzes the formation of 3-oxoacyl-CoA from enoyl-CoA via L-3-hydroxyacyl-CoA. It can also use D-3-hydroxyacyl-CoA and cis-3-enoyl-CoA as substrate. The polypeptide is Fatty acid oxidation complex subunit alpha (Escherichia fergusonii (strain ATCC 35469 / DSM 13698 / CCUG 18766 / IAM 14443 / JCM 21226 / LMG 7866 / NBRC 102419 / NCTC 12128 / CDC 0568-73)).